We begin with the raw amino-acid sequence, 211 residues long: 2,3-bisphosphoglycerate-dependent phosphoglycerate mutase (211 aa).

Substrate-binding positions include 9 to 16 (RHGQSDWN), 22 to 23 (TG), Arg-61, 88 to 91 (ERDY), Lys-99, 115 to 116 (RR), and 159 to 160 (GN). Catalysis depends on His-10, which acts as the Tele-phosphohistidine intermediate. Glu-88 functions as the Proton donor/acceptor in the catalytic mechanism.

The protein belongs to the phosphoglycerate mutase family. BPG-dependent PGAM subfamily. Homodimer.

The enzyme catalyses (2R)-2-phosphoglycerate = (2R)-3-phosphoglycerate. The protein operates within carbohydrate degradation; glycolysis; pyruvate from D-glyceraldehyde 3-phosphate: step 3/5. In terms of biological role, catalyzes the interconversion of 2-phosphoglycerate and 3-phosphoglycerate. The protein is 2,3-bisphosphoglycerate-dependent phosphoglycerate mutase of Rhizobium etli (strain CIAT 652).